Reading from the N-terminus, the 190-residue chain is Threonylcarbamoyl-AMP synthase (190 aa).

The 184-residue stretch at 7-190 (GDAIAAAIDV…ALTGELFRQG (184 aa)) folds into the YrdC-like domain.

This sequence belongs to the SUA5 family. TsaC subfamily.

It is found in the cytoplasm. The catalysed reaction is L-threonine + hydrogencarbonate + ATP = L-threonylcarbamoyladenylate + diphosphate + H2O. Functionally, required for the formation of a threonylcarbamoyl group on adenosine at position 37 (t(6)A37) in tRNAs that read codons beginning with adenine. Catalyzes the conversion of L-threonine, HCO(3)(-)/CO(2) and ATP to give threonylcarbamoyl-AMP (TC-AMP) as the acyladenylate intermediate, with the release of diphosphate. The protein is Threonylcarbamoyl-AMP synthase of Shigella flexneri.